The sequence spans 278 residues: Large ribosomal subunit protein uL2 (278 aa).

Disordered regions lie at residues 33-57 (LIRP…KGGG) and 224-278 (VVMN…GKKR). Residues 45 to 57 (AHGRITTRHKGGG) are compositionally biased toward basic residues. The span at 253-268 (PEGRTRKPNKASDKLI) shows a compositional bias: basic and acidic residues. Residues 269–278 (VRRRRTGKKR) are compositionally biased toward basic residues.

The protein belongs to the universal ribosomal protein uL2 family. Part of the 50S ribosomal subunit. Forms a bridge to the 30S subunit in the 70S ribosome.

Its function is as follows. One of the primary rRNA binding proteins. Required for association of the 30S and 50S subunits to form the 70S ribosome, for tRNA binding and peptide bond formation. It has been suggested to have peptidyltransferase activity; this is somewhat controversial. Makes several contacts with the 16S rRNA in the 70S ribosome. This Mycobacteroides abscessus (strain ATCC 19977 / DSM 44196 / CCUG 20993 / CIP 104536 / JCM 13569 / NCTC 13031 / TMC 1543 / L948) (Mycobacterium abscessus) protein is Large ribosomal subunit protein uL2.